The chain runs to 264 residues: MRFKELIFPLRVEEEEIVEKFYEEGFFNFAIEEDEKGKRVLKIYLREGEPLPDFLKDWEIVDEKITTPKDWIVELEPFEIVEGVFVDPTEKINRRDAIVIKLSPGVAFGTGLHPTTRMSVFFLKKYLKEGNTVLDVGCGTGILAIAAKKLGASQVVAVDVDEQAVEVAEENVRKNDVDVLVKWSDLLSEVEGTFDIVVSNILAEIHVKLLEDVNRVTHRDSMLILSGIVDKKEDMVKRKASEHGWNVLERKQEREWVTLVMKRS.

S-adenosyl-L-methionine-binding residues include Thr-116, Gly-137, Asp-159, and Asn-200.

The protein belongs to the methyltransferase superfamily. PrmA family.

Its subcellular location is the cytoplasm. The catalysed reaction is L-lysyl-[protein] + 3 S-adenosyl-L-methionine = N(6),N(6),N(6)-trimethyl-L-lysyl-[protein] + 3 S-adenosyl-L-homocysteine + 3 H(+). Its function is as follows. Methylates ribosomal protein L11. The chain is Ribosomal protein L11 methyltransferase from Thermotoga petrophila (strain ATCC BAA-488 / DSM 13995 / JCM 10881 / RKU-1).